A 102-amino-acid chain; its full sequence is ATP-dependent Clp protease adapter protein ClpS (102 aa).

Belongs to the ClpS family. In terms of assembly, binds to the N-terminal domain of the chaperone ClpA.

Involved in the modulation of the specificity of the ClpAP-mediated ATP-dependent protein degradation. This Shewanella piezotolerans (strain WP3 / JCM 13877) protein is ATP-dependent Clp protease adapter protein ClpS.